A 105-amino-acid polypeptide reads, in one-letter code: MNPSEMQRKAPPRRRRHCNRAPLTHKMNKMVTSEEEMKLPSTKKAEPLTWAQLKKLTQLATKCLENTKVTQTPESMLLAALMIVSMVSAGVTNSSKETATIENGP.

The interval 1-43 is disordered; that stretch reads MNPSEMQRKAPPRRRRHCNRAPLTHKMNKMVTSEEEMKLPSTK. The segment covering 10–19 has biased composition (basic residues); sequence APPRRRRHCN. The short motif at 13–20 is the Nuclear localization signal element; that stretch reads RRRRHCNR. The short motif at 50–59 is the Nuclear export signal element; the sequence is WAQLKKLTQL.

In terms of assembly, forms homodimers, homotrimers, and homotetramers via a C-terminal domain. Associates with XPO1 and with ZNF145.

It is found in the cytoplasm. It localises to the nucleus. Its subcellular location is the nucleolus. Retroviral replication requires the nuclear export and translation of unspliced, singly-spliced and multiply-spliced derivatives of the initial genomic transcript. Rec interacts with a highly structured RNA element (RcRE) present in the viral 3'LTR and recruits the cellular nuclear export machinery. This permits export to the cytoplasm of unspliced genomic or incompletely spliced subgenomic viral transcripts. The polypeptide is Endogenous retrovirus group K member 104 Rec protein (HERV-K104) (Homo sapiens (Human)).